Here is a 329-residue protein sequence, read N- to C-terminus: Beta-ketoacyl-[acyl-carrier-protein] synthase III (329 aa).

Catalysis depends on residues Cys-123 and His-256. The interval Gln-257 to Arg-261 is ACP-binding. Residue Asn-286 is part of the active site.

It belongs to the thiolase-like superfamily. FabH family. Homodimer.

The protein resides in the cytoplasm. The catalysed reaction is malonyl-[ACP] + acetyl-CoA + H(+) = 3-oxobutanoyl-[ACP] + CO2 + CoA. The protein operates within lipid metabolism; fatty acid biosynthesis. Its function is as follows. Catalyzes the condensation reaction of fatty acid synthesis by the addition to an acyl acceptor of two carbons from malonyl-ACP. Catalyzes the first condensation reaction which initiates fatty acid synthesis and may therefore play a role in governing the total rate of fatty acid production. Possesses both acetoacetyl-ACP synthase and acetyl transacylase activities. Its substrate specificity determines the biosynthesis of branched-chain and/or straight-chain of fatty acids. This chain is Beta-ketoacyl-[acyl-carrier-protein] synthase III, found in Burkholderia cenocepacia (strain HI2424).